Here is an 817-residue protein sequence, read N- to C-terminus: Phospholipase D alpha 2 (817 aa).

One can recognise a C2 domain in the interval 1–130; sequence MAHLLLHGTL…LSGEAIERRL (130 aa). Aspartate 192 is a Ca(2+) binding site. A PLD phosphodiesterase 1 domain is found at 333-372; it reads YMITHHQKTVIVDHDMPVPRGGGSRRIVSFVGGLDLCDGR. Active-site residues include histidine 338, lysine 340, and aspartate 345. Histidine 338 contributes to the a 1,2-diacyl-sn-glycero-3-phosphate binding site. Residues histidine 378 and histidine 412 each contribute to the Ca(2+) site. Glutamine 529 and histidine 668 together coordinate a 1,2-diacyl-sn-glycero-3-phosphate. A PLD phosphodiesterase 2 domain is found at 663–690; the sequence is FMIYVHSKMMIVDDEYIIVGSANINQRS. Catalysis depends on residues histidine 668, lysine 670, and aspartate 675. Glutamate 730 lines the Ca(2+) pocket.

It belongs to the phospholipase D family. C2-PLD subfamily. It depends on Ca(2+) as a cofactor.

It carries out the reaction a 1,2-diacyl-sn-glycero-3-phosphocholine + H2O = a 1,2-diacyl-sn-glycero-3-phosphate + choline + H(+). Functionally, hydrolyzes glycerol-phospholipids at the terminal phosphodiesteric bond. Plays an important role in various cellular processes. In Oryza sativa subsp. japonica (Rice), this protein is Phospholipase D alpha 2 (PLD2).